The sequence spans 159 residues: MITKAIYPGTFDPITNGHLDLVTRASAMFSHVILAIADSSSKKPMFTLDERVALAKKVTAPLKNVEVLGFSELMAEFAKKHNANILVRGLRSVSDFEYEWQLANMNRHLMPKLESVFLMPSEKWSFISSSLVKEVARHGGDITPFLPKPVTKALLAKLA.

Position 10 (T10) interacts with substrate. ATP is bound by residues 10 to 11 (TF) and H18. 3 residues coordinate substrate: K42, M74, and R88. Residues 89–91 (GLR), E99, and 124–130 (WSFISSS) each bind ATP.

It belongs to the bacterial CoaD family. Homohexamer. Mg(2+) serves as cofactor.

Its subcellular location is the cytoplasm. The catalysed reaction is (R)-4'-phosphopantetheine + ATP + H(+) = 3'-dephospho-CoA + diphosphate. It functions in the pathway cofactor biosynthesis; coenzyme A biosynthesis; CoA from (R)-pantothenate: step 4/5. In terms of biological role, reversibly transfers an adenylyl group from ATP to 4'-phosphopantetheine, yielding dephospho-CoA (dPCoA) and pyrophosphate. The sequence is that of Phosphopantetheine adenylyltransferase from Yersinia pseudotuberculosis serotype O:3 (strain YPIII).